A 379-amino-acid chain; its full sequence is Protein PatA (379 aa).

Residues 181 to 226 (RREASSQEISSSTEHNQIPVNNRRSTKFTSPPHTQPKPEPRLPQIN) are disordered. Residues 186–212 (SQEISSSTEHNQIPVNNRRSTKFTSPP) are compositionally biased toward polar residues. Residues 262–378 (TIFCIDENPI…DLLKVIFKHI (117 aa)) form the Response regulatory domain. Residue D313 is modified to 4-aspartylphosphate.

Its subcellular location is the cell septum. Functionally, controls heterocyst pattern formation. Required for the differentiation of intercalary heterocysts but not for terminal heterocysts. This chain is Protein PatA (patA), found in Nostoc sp. (strain PCC 7120 / SAG 25.82 / UTEX 2576).